The primary structure comprises 184 residues: Ribosome-recycling factor (184 aa).

It belongs to the RRF family.

It is found in the cytoplasm. In terms of biological role, responsible for the release of ribosomes from messenger RNA at the termination of protein biosynthesis. May increase the efficiency of translation by recycling ribosomes from one round of translation to another. The chain is Ribosome-recycling factor from Lachnoclostridium phytofermentans (strain ATCC 700394 / DSM 18823 / ISDg) (Clostridium phytofermentans).